A 284-amino-acid polypeptide reads, in one-letter code: Nucleotide-binding protein Shewmr7_3352 (284 aa).

Residue 8–15 (GRSGSGKS) coordinates ATP. 56–59 (DVRN) is a binding site for GTP.

Belongs to the RapZ-like family.

Functionally, displays ATPase and GTPase activities. In Shewanella sp. (strain MR-7), this protein is Nucleotide-binding protein Shewmr7_3352.